We begin with the raw amino-acid sequence, 314 residues long: Probable 5-dehydro-4-deoxyglucarate dehydratase (314 aa).

This sequence belongs to the DapA family.

It carries out the reaction 5-dehydro-4-deoxy-D-glucarate + H(+) = 2,5-dioxopentanoate + CO2 + H2O. The protein operates within carbohydrate acid metabolism; D-glucarate degradation; 2,5-dioxopentanoate from D-glucarate: step 2/2. The polypeptide is Probable 5-dehydro-4-deoxyglucarate dehydratase (Bradyrhizobium sp. (strain ORS 278)).